The following is a 452-amino-acid chain: MKRLSITVRLTLLFILLLSVAGAGIVWTLYNGLASELKWRDDTTLINRTAQIKQLLIDGVNPDTLPVYFNRMMDVSQDILIIHGDSINKIVNRTNVSDGMLNNIPASETISAAGIYRSIINDTEIDALRINIDEVSPSLTVTVAKLASARHNMLEQYKINSIIICIVAIVLCSVLSPLLIRTGLREIKKLSGVTEALNYNDSREPVEVSALPRELKPLGQALNKMHHALVKDFERLSQFADDLAHELRTPINALLGQNQVTLSQTRSIAEYQKTIAGNIEELENISRLTENILFLARADKNNVLVKLDSLSLNKEVENLLDYLEYLSDEKEICFKVECNQQIFADKILLQRMLSNLIVNAIRYSPEKSRIHITSFLDTNSYLNIDIASPGTKINEPEKLFRRFWRGDNSRHSVGQGLGLSLVKAIAELHGGSATYHYLNKHNVFRITLPQRN.

Topologically, residues 1–9 (MKRLSITVR) are cytoplasmic. The helical transmembrane segment at 10 to 30 (LTLLFILLLSVAGAGIVWTLY) threads the bilayer. Topologically, residues 31-158 (NGLASELKWR…ARHNMLEQYK (128 aa)) are periplasmic. The chain crosses the membrane as a helical span at residues 159 to 179 (INSIIICIVAIVLCSVLSPLL). Residues 180–452 (IRTGLREIKK…VFRITLPQRN (273 aa)) lie on the Cytoplasmic side of the membrane. In terms of domain architecture, HAMP spans 181-234 (RTGLREIKKLSGVTEALNYNDSREPVEVSALPRELKPLGQALNKMHHALVKDFE). Positions 242–452 (DLAHELRTPI…VFRITLPQRN (211 aa)) constitute a Histidine kinase domain. H245 carries the phosphohistidine; by autocatalysis modification.

Post-translationally, autophosphorylated.

The protein localises to the cell inner membrane. It carries out the reaction ATP + protein L-histidine = ADP + protein N-phospho-L-histidine.. Functionally, member of a two-component regulatory system HprR/HprS involved in response to hydrogen peroxide. Senses H(2)O(2), maybe via the redox state of the membrane. Activates HprR by phosphorylation. Can also phosphorylate CusR. The sequence is that of Sensor histidine kinase HprS from Escherichia coli (strain K12).